The following is a 340-amino-acid chain: MGGVAAGTRWIHHVRRLSAAKVSTDALERGQSRVIDASLTLIRERAKLKAELLRALGGVKASACLLGVPLGHNSSFLQGPAFAPPRIREAIWCGSTNSSTEEGKELNDPRVLTDVGDVPIQEIRDCGVEDDRLMNVVSESVKTVMEEDPLRPLVLGGDHSISYPVVRAVSEKLGGPVDILHLDAHPDIYDAFEGNIYSHASSFARIMEGGYARRLLQVGIRSITKEGREQGKRFGVEQYEMRTFSKDREKLESLKLGEGVKGVYISVDVDCLDPAFAPGVSHIEPGGLSFRDVLNILHNLQGDVVAGDVVEFNPQRDTVDGMTAMVAAKLVRELTAKISK.

A mitochondrion-targeting transit peptide spans 1 to 24; that stretch reads MGGVAAGTRWIHHVRRLSAAKVST. Residues H159, D183, H185, and D187 each contribute to the Mn(2+) site. Residues 185–189 and 193–195 contribute to the substrate site; these read HPDIY and EGN. The Mn(2+) site is built by D268 and D270. E311 serves as a coordination point for substrate.

This sequence belongs to the arginase family. Mn(2+) serves as cofactor.

It is found in the mitochondrion. The catalysed reaction is L-arginine + H2O = urea + L-ornithine. It participates in nitrogen metabolism; urea cycle; L-ornithine and urea from L-arginine: step 1/1. Functionally, catalyzes the hydrolysis of L-arginine to urea and L-ornithine. The latter can be utilized in the urea cycle or as a precursor for the synthesis of both polyamines and proline. In Oryza sativa subsp. indica (Rice), this protein is Arginase 1, mitochondrial.